We begin with the raw amino-acid sequence, 656 residues long: MLSQFTRSLSCFVKPTPPKLNKLTRTMTVLPKILQDARPKVSPELDYSTYSNYQNFKINHTDLNLNISFDDSIVNGFVTFNLNKIDKSCNEIRLDTSFLTVDSVEIDDAKVDFQLKDRLEPLGSQLIINPPTATSLNNEFNLKLGFSTTKDCTALQWLNGEQTSSGKPYVFSQLEAIHARALFPCFDTPSVKSTFNAAITSTLPVVFSGIEQSVVDNGNGTKTYNFKQSVPIPAYLIGIASGDLVSGEIGPRSKVYTEPFRLKDCEWEFSGDVEKFIQAAEKIIFPYEWGTYDILVNVNSYPYGGMESPNMTFATPTLIAYDKSNIDVIAHELAHSWSGNLVTNCSWNHFWLNEGWTVYLERRIVAAIHGEATRHFSALIGWNDLANSISAMKNPDRFSTLIQNLNDGTDPDEAFSSVPYEKGFNLLFHLETILGGPKEFDPFIKHYFTKFSKKSLDSYQFFDTLFEFFADKREILDAVDWETWLYKPGMPPKPKFITTLADNVYSLAEKWATEIKNGNTTEDDLKQAFTAADIKDFNSNQIVLFLDTLVQNKEIQWNNHHTAAKTLLKIYEDSIVKSRNAEVVFRTYRFEITAQLKESYPQLAEWLATVGRMKFVRPGYRLLNSVDRPLALATFEKLQNIYHPICKALVKQDLEA.

Residues 173–175 (QLE) and 302–307 (PYGGME) contribute to the substrate site. Histidine 331 contributes to the Zn(2+) binding site. Glutamate 332 functions as the Proton acceptor in the catalytic mechanism. Histidine 335 and glutamate 354 together coordinate Zn(2+). Residue tyrosine 420 is the Proton donor of the active site.

Belongs to the peptidase M1 family. Requires Zn(2+) as cofactor.

It is found in the cytoplasm. It localises to the nucleus. The catalysed reaction is an epoxide + H2O = an ethanediol. Functionally, aminopeptidase that preferentially cleaves di- and tripeptides. Also has low epoxide hydrolase activity (in vitro). Can hydrolyze the epoxide leukotriene LTA(4) but it forms preferentially 5,6-dihydroxy-7,9,11,14-eicosatetraenoic acid rather than the cytokine leukotriene B(4) as the product compared to the homologous mammalian enzyme (in vitro). This chain is Leucine aminopeptidase 2, found in Vanderwaltozyma polyspora (strain ATCC 22028 / DSM 70294 / BCRC 21397 / CBS 2163 / NBRC 10782 / NRRL Y-8283 / UCD 57-17) (Kluyveromyces polysporus).